The chain runs to 837 residues: Dapper homolog 2 (837 aa).

The stretch at 65 to 113 forms a coiled coil; sequence ENVSKEELRLEATLSLLKQQLTRLRRQDVGLKTHLQQLDQQITELKLDV. 5 disordered regions span residues 189–265, 424–497, 512–564, 600–649, and 738–782; these read ADES…PKYQ, HGKH…DKSS, GSQR…KQSG, QQIP…HTQR, and EMSD…EDEG. Composition is skewed to polar residues over residues 246–265 and 432–445; these read VKSS…PKYQ and LDLQ…NNTA. Basic and acidic residues-rich tracts occupy residues 456–466, 486–496, and 548–560; these read ASEKRSGHFPK, EGSRASCHDKS, and LSRE…RTDL. Positions 741–759 are enriched in polar residues; sequence DYTTNRFGDSESSQGSQTA. Over residues 768 to 782 the composition is skewed to acidic residues; the sequence is LDEEDLLEEEEEDEG. The short motif at 834 to 837 is the PDZ-binding element; the sequence is MTLV.

The protein belongs to the dapper family. As to quaternary structure, interacts with dvl2.

The protein resides in the cytoplasm. The protein localises to the late endosome. It localises to the nucleus. Its subcellular location is the cell membrane. Its function is as follows. Involved in regulation of intracellular signaling pathways during development. Specifically thought to play a role in canonical and/or non-canonical Wnt signaling pathways through interaction with DSH (Dishevelled) family proteins. Positive regulator of the Wnt signaling pathway which acts downstream of wnt1 indicative for non-canonical Wnt signaling. Also negatively regulates the Nodal signaling pathway, possibly by promoting the lysosomal degradation of Nodal receptors. Required for convergent extension movements in gastrulation. The protein is Dapper homolog 2 (dact2) of Danio rerio (Zebrafish).